A 351-amino-acid polypeptide reads, in one-letter code: Histidinol-phosphate aminotransferase (351 aa).

The segment at 1–26 (MRFRAELEPLSPYNPPRASQEAAAER) is disordered. Position 223 is an N6-(pyridoxal phosphate)lysine (K223).

This sequence belongs to the class-II pyridoxal-phosphate-dependent aminotransferase family. Histidinol-phosphate aminotransferase subfamily. Homodimer. Requires pyridoxal 5'-phosphate as cofactor.

The catalysed reaction is L-histidinol phosphate + 2-oxoglutarate = 3-(imidazol-4-yl)-2-oxopropyl phosphate + L-glutamate. It participates in amino-acid biosynthesis; L-histidine biosynthesis; L-histidine from 5-phospho-alpha-D-ribose 1-diphosphate: step 7/9. The protein is Histidinol-phosphate aminotransferase of Rubrobacter xylanophilus (strain DSM 9941 / JCM 11954 / NBRC 16129 / PRD-1).